Consider the following 200-residue polypeptide: Probable nicotinate-nucleotide adenylyltransferase (200 aa).

Belongs to the NadD family.

The catalysed reaction is nicotinate beta-D-ribonucleotide + ATP + H(+) = deamido-NAD(+) + diphosphate. It participates in cofactor biosynthesis; NAD(+) biosynthesis; deamido-NAD(+) from nicotinate D-ribonucleotide: step 1/1. Functionally, catalyzes the reversible adenylation of nicotinate mononucleotide (NaMN) to nicotinic acid adenine dinucleotide (NaAD). The polypeptide is Probable nicotinate-nucleotide adenylyltransferase (Clostridium novyi (strain NT)).